We begin with the raw amino-acid sequence, 741 residues long: Subtilisin-like protease SBT4.4 (741 aa).

The signal sequence occupies residues 1–24; it reads MAKGTTFIFLFSSLLVLSLSSVSA. A propeptide spans 25-112 (activation peptide); it reads DKDDHGDQQV…VFPSRKLKLQ (88 aa). The Inhibitor I9 domain maps to 34 to 111; it reads VYIVYLGSLP…SVFPSRKLKL (78 aa). The Peptidase S8 domain occupies 116-589; it reads SWNFMGLKEG…SGHVDPIDAI (474 aa). Catalysis depends on Asp-144, which acts as the Charge relay system. 2 N-linked (GlcNAc...) asparagine glycosylation sites follow: Asn-175 and Asn-195. His-204 functions as the Charge relay system in the catalytic mechanism. Residues Asn-227 and Asn-357 are each glycosylated (N-linked (GlcNAc...) asparagine). The PA domain occupies 359–445; the sequence is TNYPLVYGKS…LSNDDYKSLV (87 aa). N-linked (GlcNAc...) asparagine glycosylation occurs at Asn-449. Ser-528 (charge relay system) is an active-site residue. N-linked (GlcNAc...) asparagine glycosylation is found at Asn-565, Asn-610, Asn-623, and Asn-654.

The protein belongs to the peptidase S8 family. Post-translationally, the C-terminal propeptide is autocleaved.

Its subcellular location is the secreted. This is Subtilisin-like protease SBT4.4 from Arabidopsis thaliana (Mouse-ear cress).